Here is a 636-residue protein sequence, read N- to C-terminus: Probable potassium transport system protein Kup (636 aa).

12 consecutive transmembrane segments (helical) span residues L22–Y42, I64–I84, L115–P135, F150–L170, L182–I202, F220–T240, W261–L281, L293–I313, I351–F371, V383–L403, P408–A428, and I433–T453.

This sequence belongs to the HAK/KUP transporter (TC 2.A.72) family.

It localises to the cell inner membrane. It catalyses the reaction K(+)(in) + H(+)(in) = K(+)(out) + H(+)(out). Its function is as follows. Transport of potassium into the cell. Likely operates as a K(+):H(+) symporter. The protein is Probable potassium transport system protein Kup of Pseudomonas putida (strain GB-1).